Reading from the N-terminus, the 259-residue chain is Glutamate racemase (259 aa).

Substrate is bound by residues 9 to 10 and 41 to 42; these read DS and YG. The active-site Proton donor/acceptor is the C73. 74 to 75 provides a ligand contact to substrate; the sequence is NT. C183 serves as the catalytic Proton donor/acceptor. 184–185 lines the substrate pocket; sequence TH.

It belongs to the aspartate/glutamate racemases family.

The catalysed reaction is L-glutamate = D-glutamate. Its pathway is cell wall biogenesis; peptidoglycan biosynthesis. Its function is as follows. Provides the (R)-glutamate required for cell wall biosynthesis. The chain is Glutamate racemase from Shewanella frigidimarina (strain NCIMB 400).